The chain runs to 320 residues: Probable carboxylesterase M8 (320 aa).

An Involved in the stabilization of the negatively charged intermediate by the formation of the oxyanion hole motif is present at residues 52 to 54; sequence HGG. Catalysis depends on residues serine 137 and histidine 296.

Belongs to the 'GDXG' lipolytic enzyme family.

The enzyme catalyses a carboxylic ester + H2O = an alcohol + a carboxylate + H(+). The protein operates within secondary metabolite biosynthesis. In terms of biological role, probable carboxylesterase; part of the gene cluster that mediates the biosynthesis of squalestatin S1 (SQS1, also known as zaragozic acid A), a heavily oxidized fungal polyketide that offers potent cholesterol lowering activity by targeting squalene synthase (SS). SQS1 is composed of a 2,8-dioxobicyclic[3.2.1]octane-3,4,5-tricarboxyclic acid core that is connected to two lipophilic polyketide arms. These initial steps feature the priming of an unusual benzoic acid starter unit onto the highly reducing polyketide synthase pks2, followed by oxaloacetate extension and product release to generate a tricarboxylic acid containing product. The phenylalanine ammonia lyase (PAL) M7 and the acyl-CoA ligase M9 are involved in transforming phenylalanine into benzoyl-CoA. The citrate synthase-like protein R3 is involved in connecting the C-alpha-carbons of the hexaketide chain and oxaloacetate to afford the tricarboxylic acid unit. The potential hydrolytic enzymes, M8 and M10, are in close proximity to pks2 and may participate in product release. On the other side, the tetraketide arm is synthesized by a the squalestatin tetraketide synthase pks1 and enzymatically esterified to the core in the last biosynthetic step, by the acetyltransferase M4. The biosynthesis of the tetraketide must involve 3 rounds of chain extension. After the first and second rounds methyl-transfer occurs, and in all rounds of extension the ketoreductase and dehydratase are active. The enoyl reductase and C-MeT of pks1 are not active in the final round of extension. The acetyltransferase M4 appears to have a broad substrate selectivity for its acyl CoA substrate, allowing the in vitro synthesis of novel squalestatins. The biosynthesis of SQS1 requires several oxidative steps likely performed by oxidoreductases M1, R1 and R2. Finally, in support of the identification of the cluster as being responsible for SQS1 production, the cluster contains a gene encoding a putative squalene synthase (SS) R6, suggesting a likely mechanism for self-resistance. In Phoma sp. (strain ATCC 20986 / MF5453), this protein is Probable carboxylesterase M8.